We begin with the raw amino-acid sequence, 169 residues long: Nucleoside diphosphate kinase 3 (169 aa).

ADP-binding residues include K29, R105, T111, R122, V129, and N132. Residue H135 is the Pros-phosphohistidine intermediate of the active site.

It belongs to the NDK family. In terms of assembly, homohexamer. Requires Mg(2+) as cofactor.

Its subcellular location is the mitochondrion outer membrane. The protein localises to the cytoplasm. The protein resides in the cytoskeleton. It localises to the cilium basal body. It carries out the reaction a 2'-deoxyribonucleoside 5'-diphosphate + ATP = a 2'-deoxyribonucleoside 5'-triphosphate + ADP. It catalyses the reaction a ribonucleoside 5'-diphosphate + ATP = a ribonucleoside 5'-triphosphate + ADP. In terms of biological role, catalyzes the phosphorylation of ribonucleosides and deoxyribonucleoside diphosphates, other than ATP, into the corresponding triphosphates with ATP as the major phosphate donor. The ATP gamma phosphate is transferred to the nucleoside diphosphate beta phosphate via a ping-pong mechanism, using a phosphorylated active-site intermediate. Through the catalyzed exchange of gamma-phosphate between di- and triphosphonucleosides participates in regulation of intracellular nucleotide homeostasis. Required for ciliary function during renal development. Functionally, independently of its kinase activity, facilitates mitochondrial tethering prior to membrane fusion through its direct membrane-binding and hexamerization. Implicated in repair of both single- and double-stranded breaks in DNA, independently of its kinase activity. This chain is Nucleoside diphosphate kinase 3, found in Danio rerio (Zebrafish).